The sequence spans 312 residues: Ribosomal RNA small subunit methyltransferase H (312 aa).

S-adenosyl-L-methionine-binding positions include 35–37 (GGH), Asp-55, Phe-85, Asp-101, and Gln-108.

The protein belongs to the methyltransferase superfamily. RsmH family.

It is found in the cytoplasm. The enzyme catalyses cytidine(1402) in 16S rRNA + S-adenosyl-L-methionine = N(4)-methylcytidine(1402) in 16S rRNA + S-adenosyl-L-homocysteine + H(+). Functionally, specifically methylates the N4 position of cytidine in position 1402 (C1402) of 16S rRNA. The protein is Ribosomal RNA small subunit methyltransferase H of Buchnera aphidicola subsp. Acyrthosiphon pisum (strain Tuc7).